Reading from the N-terminus, the 289-residue chain is 7-methylguanosine phosphate-specific 5'-nucleotidase (289 aa).

The active-site Nucleophile is the Asp38. Asp38 and Asp40 together coordinate Mg(2+). Residue Asp40 is the Proton donor of the active site. Glu85 contributes to the CMP binding site. Glu85 contacts N(7)-methyl-GMP. Substrate is bound by residues 153–154 (SA) and Lys202. Asp227 contributes to the Mg(2+) binding site.

It belongs to the pyrimidine 5'-nucleotidase family. In terms of assembly, monomer.

It localises to the cytoplasm. The enzyme catalyses N(7)-methyl-GMP + H2O = N(7)-methylguanosine + phosphate. The catalysed reaction is CMP + H2O = cytidine + phosphate. It catalyses the reaction a ribonucleoside 5'-phosphate + H2O = a ribonucleoside + phosphate. Its function is as follows. Specifically hydrolyzes 7-methylguanosine monophosphate (m(7)GMP) to 7-methylguanosine and inorganic phosphate. The specific activity for m(7)GMP may protect cells against undesired salvage of m(7)GMP and its incorporation into nucleic acids. Also has weak activity for CMP. UMP and purine nucleotides are poor substrates. This is 7-methylguanosine phosphate-specific 5'-nucleotidase (NT5C3B) from Gallus gallus (Chicken).